The chain runs to 45 residues: Large ribosomal subunit protein bL34 (45 aa).

It belongs to the bacterial ribosomal protein bL34 family.

The sequence is that of Large ribosomal subunit protein bL34 from Corynebacterium urealyticum (strain ATCC 43042 / DSM 7109).